The sequence spans 340 residues: 4-hydroxythreonine-4-phosphate dehydrogenase (340 aa).

Thr-135 contacts substrate. The a divalent metal cation site is built by His-170, His-215, and His-276. Residues Lys-284, Asn-293, and Arg-302 each contribute to the substrate site.

The protein belongs to the PdxA family. In terms of assembly, homodimer. A divalent metal cation serves as cofactor.

Its subcellular location is the cytoplasm. The catalysed reaction is 4-(phosphooxy)-L-threonine + NAD(+) = 3-amino-2-oxopropyl phosphate + CO2 + NADH. Its pathway is cofactor biosynthesis; pyridoxine 5'-phosphate biosynthesis; pyridoxine 5'-phosphate from D-erythrose 4-phosphate: step 4/5. In terms of biological role, catalyzes the NAD(P)-dependent oxidation of 4-(phosphooxy)-L-threonine (HTP) into 2-amino-3-oxo-4-(phosphooxy)butyric acid which spontaneously decarboxylates to form 3-amino-2-oxopropyl phosphate (AHAP). The sequence is that of 4-hydroxythreonine-4-phosphate dehydrogenase from Synechococcus sp. (strain JA-2-3B'a(2-13)) (Cyanobacteria bacterium Yellowstone B-Prime).